Consider the following 375-residue polypeptide: Probable pectin lyase C (375 aa).

The signal sequence occupies residues 1–20; the sequence is MKITSTIPAVLLGLAPLSAA. 2 cysteine pairs are disulfide-bonded: Cys-83-Cys-100 and Cys-92-Cys-220. Residue Arg-250 is part of the active site. Residues Cys-317 and Cys-325 are joined by a disulfide bond.

The protein belongs to the polysaccharide lyase 1 family.

The protein resides in the secreted. The enzyme catalyses Eliminative cleavage of (1-&gt;4)-alpha-D-galacturonan methyl ester to give oligosaccharides with 4-deoxy-6-O-methyl-alpha-D-galact-4-enuronosyl groups at their non-reducing ends.. Its function is as follows. Pectinolytic enzymes consist of four classes of enzymes: pectin lyase, polygalacturonase, pectin methylesterase and rhamnogalacturonase. Among pectinolytic enzymes, pectin lyase is the most important in depolymerization of pectin, since it cleaves internal glycosidic bonds of highly methylated pectins. This Aspergillus oryzae (strain ATCC 42149 / RIB 40) (Yellow koji mold) protein is Probable pectin lyase C (pelC).